Here is a 252-residue protein sequence, read N- to C-terminus: Type II secretion system protein N (252 aa).

Topologically, residues 1-4 (MKNR) are cytoplasmic. A helical membrane pass occupies residues 5–25 (LTIGLLLAAIYLFWLLLSAPA). At 26 to 252 (RLLALTLSDD…QGEWLSEEKK (227 aa)) the chain is on the periplasmic side.

Belongs to the GSP N family.

It is found in the cell inner membrane. Involved in a type II secretion system (T2SS, formerly general secretion pathway, GSP) for the export of proteins. Required for the translocation of pullulanase. The sequence is that of Type II secretion system protein N (pulN) from Klebsiella pneumoniae.